A 488-amino-acid chain; its full sequence is Dipeptide and tripeptide permease B (488 aa).

The Cytoplasmic portion of the chain corresponds to 1–27 (MSKTASVGLWDQPKPFFMIFFVELWER). The chain crosses the membrane as a helical span at residues 28 to 48 (FGFYGVQGILAIYFVQQLGFS). Topologically, residues 49-52 (EEQS) are periplasmic. Residues 53 to 73 (FITFGAFTALVYGLISVGGYV) form a helical membrane-spanning segment. Topologically, residues 74 to 82 (GDHILGTKR) are cytoplasmic. A helical membrane pass occupies residues 83–103 (TIVLGAIVMAIGYYMIGLSIM). The Periplasmic segment spans residues 104 to 106 (KPE). A helical membrane pass occupies residues 107-127 (LIFYALGTVAVGNGLFKANPA). Topologically, residues 128 to 146 (SLLAKCYQPQDPRLDGAFT) are cytoplasmic. The chain crosses the membrane as a helical span at residues 147 to 167 (LFYMSINLGSLFSLSLAPVIA). The Periplasmic portion of the chain corresponds to 168 to 172 (EKYGY). Residues 173–193 (TVTYNICGIGLIIALLVYIAC) traverse the membrane as a helical segment. Residues 194-211 (RRMVHNIGSAPDHHPVKP) lie on the Cytoplasmic side of the membrane. A helical transmembrane segment spans residues 212-232 (IGLIAVLIGSVVMVGVCAWLL). Over 233 to 234 (HN) the chain is Periplasmic. Residues 235 to 255 (IKVANIALFAITTIVVLIFFW) traverse the membrane as a helical segment. Topologically, residues 256-267 (QAFKQNRVGRNK) are cytoplasmic. The helical transmembrane segment at 268–288 (MFVAFILMLQAVVFFILYNQM) threads the bilayer. Residues 289–311 (PMSLNFFAINNVHHQILGFDVNP) lie on the Periplasmic side of the membrane. Residues 312 to 332 (VSFQAFNPFWIIIVSPILAVV) traverse the membrane as a helical segment. At 333 to 348 (YTKLGAKGKDFSMPAK) the chain is on the cytoplasmic side. Residues 349-369 (FTFGMFLCSLGFLTAAASGLF) form a helical membrane-spanning segment. The Periplasmic portion of the chain corresponds to 370–378 (ADAQGITSP). Residues 379–399 (WFIVLVYLFQSVGELMISALG) traverse the membrane as a helical segment. At 400 to 423 (LAMVAAFVPSYLTGFILGMWFLSQ) the chain is on the cytoplasmic side. Residues 424 to 444 (AVASMLASHVAALTATPVGVT) traverse the membrane as a helical segment. Residues 445-455 (DPLQTLPIYMS) lie on the Periplasmic side of the membrane. The chain crosses the membrane as a helical span at residues 456–476 (VFGKIGVATLIVAIIMTFMVP). Over 477 to 488 (WLNRIMREEVKA) the chain is Cytoplasmic.

This sequence belongs to the major facilitator superfamily. Proton-dependent oligopeptide transporter (POT/PTR) (TC 2.A.17) family. DtpB subfamily.

Its subcellular location is the cell inner membrane. Proton-dependent permease that transports di- and tripeptides. This chain is Dipeptide and tripeptide permease B, found in Xenorhabdus bovienii (strain SS-2004) (Xenorhabdus nematophila subsp. bovienii).